Here is a 173-residue protein sequence, read N- to C-terminus: uncharacterized protein (173 aa).

Positions 4–173 (VKIVQVSEKD…TDFLLKKALV (170 aa)) constitute an N-acetyltransferase domain. Acetyl-CoA is bound by residues 97–99 (IYL), 106–110 (RGLGK), and 136–138 (NEN).

This is an uncharacterized protein from Lactobacillus delbrueckii subsp. lactis.